Reading from the N-terminus, the 253-residue chain is MICOS complex subunit mic25 (253 aa).

Residues 1–89 (MGGSESTGRK…GAHKPTAAGV (89 aa)) form a disordered region. The N-myristoyl glycine moiety is linked to residue Gly2. The span at 28–44 (RLSDEVVNRMKDSDLPS) shows a compositional bias: basic and acidic residues. Residues 48–64 (STSAASGTASAPAAFPS) show a composition bias toward low complexity. Positions 94 to 178 (AEEDLYRRYE…EQLSSIEKKN (85 aa)) form a coiled coil. The 43-residue stretch at 206-248 (DPVCMNLQADILKCYSENKQERLNCSNLAKEYRKCVSAAQKNL) folds into the CHCH domain. 2 short sequence motifs (cx9C motif) span residues 209 to 219 (CMNLQADILKC) and 230 to 240 (CSNLAKEYRKC). 2 disulfide bridges follow: Cys209–Cys240 and Cys219–Cys230.

It belongs to the MICOS complex subunit Mic19 family. Metazoan Mic25 subfamily. As to quaternary structure, component of the mitochondrial contact site and cristae organizing system (MICOS) complex (also known as MINOS or MitOS complex).

It localises to the mitochondrion inner membrane. Functionally, component of the MICOS complex, a large protein complex of the mitochondrial inner membrane that plays crucial roles in the maintenance of crista junctions, inner membrane architecture, and formation of contact sites to the outer membrane. This is MICOS complex subunit mic25 (chchd6) from Xenopus tropicalis (Western clawed frog).